A 1370-amino-acid polypeptide reads, in one-letter code: MAYSIANNQLLRQNFAKIKKIIDIPNLIDIQKNSYKRFLQIDTPPEARKNSGLEAVFKSVFPIKDFSDTASLEYVSYSLGTPKYDVEECHQRGMTFAAPMKVKVRLVVWDVNKDTGVRSIRDIKEQEVYFGEIPLMTENGTFIINGTERVIVSQLHRSPGVFYDHDKGKTHSSGKVLYSARVIPYRGSWLDFEFDHKDILYVRIDRRRKMPATVLLKALGNSAEELLNFYYRSEEIGLDGERMWKKADAELLTTQKTSSDIVDSKTGEVIIKANRKFTKAAIRKMTEHGITEIPIKAEEVCGKYASTDIVDPATGEVLVECNEEISQAKLDEIKARGISEFKVLFIDNLHVTSSLRDTLLVDKINTTDDALIEIYRRLRPGDPPTLKSAQALFDNLFFNAERYDLSAVGRLKLNYKLGLGVPLDCQVLTKEDILEVVRYLIDLKNGRGTIDDIDHLGNRRVRAVGELLENQYRIGLVRMERAIKERMSLQEVENLMPHDLINSKPVSAVVKEFFGSSQLSQFMDQTNPLSEVTHKRRLSALGPGGLTRERAGFEVRDVHPTHYGRVCPIETPEGPNIGLIASLSTYARINEHGFVETPYRIVSEGKVTAEVKFFSALEEEGHAIAQANAEMDADGRFVNDYVSARKSGEFLLVHRDELELMDVAPMQLVSVAASLIPFLENDDANRALMGSNMQRQAVPLLKADSPLVGTGMERVVAKDSGVSVVARHTGVVESVDASRIVVKIDEDEYDETGTGVDIYNLIKFARSNQNTCINQRPVVKVGDHVKRGDVIADGPSTDMGELALGQNVVVAFMPWGGYNFEDSILISEKLTKDDRYTSIHIEEFECVARDTKLGKEEITSDIPNLGEETLKDLDESGIIRIGAEVKPGDIMVGKITPKGETQLSPEEKLLRAIFGEKAGDVRDTSLRVPPGVEGTVIGAKVFSRKGNDKDSRTEMIERMEEEKLRKDEQDEIRIIRDSAVGKLKRLLVGKTAAVKVEDKNGKTVIAKDAAITEEALTAIPLDRWDEISVSGGEGVEEKVAAILATLQQQIDIIKYVFDDKVQKLKRGDDLPPGVIKMVKVYIAIKRKLQVGDKMAGRHGNKGVVSRILPEEDMPYMEDGRPVEIVLNPLGVPSRMNVGQILETHLGWAAKGIGWKIEEMLEKHSPSATIKEYLQKVYGSKEMNAFLDSLNEEELINVAKRLQRGVPMASPVFEGASEEQIRSMLDKAGFDETAQVRLFDGKTGEPFKHKVTVGVMYVLKLHHLVDDKIHARSIGPYSLVTQQPLGGKAQFGGQRLGEMEVWAMEAYGAAYALQEFLTVKSDDVAGRTRMYEAIVKGKHTLEPGLPESFNVLIKELQSLCLDVELLEGDED.

It belongs to the RNA polymerase beta chain family. In terms of assembly, the RNAP catalytic core consists of 2 alpha, 1 beta, 1 beta' and 1 omega subunit. When a sigma factor is associated with the core the holoenzyme is formed, which can initiate transcription.

It catalyses the reaction RNA(n) + a ribonucleoside 5'-triphosphate = RNA(n+1) + diphosphate. DNA-dependent RNA polymerase catalyzes the transcription of DNA into RNA using the four ribonucleoside triphosphates as substrates. This chain is DNA-directed RNA polymerase subunit beta, found in Geobacter metallireducens (strain ATCC 53774 / DSM 7210 / GS-15).